The chain runs to 959 residues: Ataxin-2 homolog (959 aa).

Residues 13-92 (DVLSAINDMI…IVDFAYVTQE (80 aa)) form the Sm domain. Disordered stretches follow at residues 203-378 (AREI…GSRV), 392-484 (TAPK…SVIT), 501-528 (PRVAPATPTATTPVQNEYHPQQQPHPAM), 697-831 (PPQG…QHIQ), and 867-959 (PMQQ…QSPP). The span at 226-235 (DLDKITRQED) shows a compositional bias: basic and acidic residues. Over residues 246–260 (NNSFNQQQQQRRNPN) the composition is skewed to low complexity. Residues 270–281 (RRAEGLRGDRRN) show a composition bias toward basic and acidic residues. Low complexity predominate over residues 282–313 (SGSSSANNSRYGAPAAAQQNYSQNQQQQQGQK). 2 stretches are compositionally biased toward polar residues: residues 341 to 356 (RQQQKQMLDPRPNNNV) and 473 to 484 (VSVTSENDSVIT). Composition is skewed to low complexity over residues 504–528 (APATPTATTPVQNEYHPQQQPHPAM), 697–707 (PPQGQQQQPRY), and 715–725 (QQQQQQPQQQQ). 2 stretches are compositionally biased toward polar residues: residues 726–742 (FSGEQSRPQSHPNSQPT) and 756–765 (APQNGNMQAE). Residues 766-788 (SSSNASHSGSTSSQSGQRSGSPP) show a composition bias toward low complexity. Over residues 789–798 (GAVPPPPPPQ) the composition is skewed to pro residues. 3 stretches are compositionally biased toward low complexity: residues 822–831 (MMQQQQQHIQ), 867–876 (PMQQNQHPQQ), and 902–911 (QQQQQQQQQQ). Residues 912 to 922 (MHRQNSLPQQF) show a composition bias toward polar residues. The span at 923–935 (QGNQGVNPSGQQS) shows a compositional bias: low complexity. Polar residues predominate over residues 948–959 (TPRDQQHSQSPP).

Belongs to the ataxin-2 family. Interacts (via C-terminus) with szy-20 (via C-terminus); the interaction is RNA independent. Interacts with pab-1. Interacts with gdi-1. As to expression, expressed in the central nervous system, dorsal and ventral nerve cord, intestinal lining and body-wall muscle. Expressed in the gonad.

Its subcellular location is the cytoplasm. The protein resides in the nucleus. Functionally, probable RNA-binding protein that negatively regulates the translation of targets. Functions with RNA-binding protein szy-20 to ensure embryonic cell division, and to this end, plays a role in the regulation of centrosome assembly, position and size, and in astral microtubule outgrowth and nucleation. Required for gonad development, germ cell proliferation and for the production of oocytes. Regulates whole body growth and fat accumulation in response to food availability, and this may be through the mTOR pathway, upstream of daf-15 and rheb-1. The sequence is that of Ataxin-2 homolog from Caenorhabditis elegans.